A 692-amino-acid chain; its full sequence is UvrABC system protein B (692 aa).

Residues glutamate 32–phenylalanine 187 form the Helicase ATP-binding domain. Glycine 45–threonine 52 serves as a coordination point for ATP. The short motif at tyrosine 98–valine 121 is the Beta-hairpin element. A Helicase C-terminal domain is found at glutamine 436 to isoleucine 631. The 36-residue stretch at lysine 656–methionine 691 folds into the UVR domain.

This sequence belongs to the UvrB family. As to quaternary structure, forms a heterotetramer with UvrA during the search for lesions. Interacts with UvrC in an incision complex.

It is found in the cytoplasm. Functionally, the UvrABC repair system catalyzes the recognition and processing of DNA lesions. A damage recognition complex composed of 2 UvrA and 2 UvrB subunits scans DNA for abnormalities. Upon binding of the UvrA(2)B(2) complex to a putative damaged site, the DNA wraps around one UvrB monomer. DNA wrap is dependent on ATP binding by UvrB and probably causes local melting of the DNA helix, facilitating insertion of UvrB beta-hairpin between the DNA strands. Then UvrB probes one DNA strand for the presence of a lesion. If a lesion is found the UvrA subunits dissociate and the UvrB-DNA preincision complex is formed. This complex is subsequently bound by UvrC and the second UvrB is released. If no lesion is found, the DNA wraps around the other UvrB subunit that will check the other stand for damage. In Lactococcus lactis subsp. cremoris (strain MG1363), this protein is UvrABC system protein B.